The sequence spans 456 residues: Glycerol-3-phosphate dehydrogenase [NAD(+)] At3g07690, cytosolic (456 aa).

Residues 41 to 46 (GAGAWG), Lys-189, and Ala-228 contribute to the NAD(+) site. Lys-189 contacts substrate. The Proton acceptor role is filled by Lys-278. NAD(+)-binding residues include Arg-340 and Gln-368. 340-341 (RN) contributes to the substrate binding site.

The protein belongs to the NAD-dependent glycerol-3-phosphate dehydrogenase family. In terms of assembly, homodimer.

The protein localises to the cytoplasm. The catalysed reaction is sn-glycerol 3-phosphate + NAD(+) = dihydroxyacetone phosphate + NADH + H(+). Its function is as follows. Required for glycerol-3-phosphate (G3P) accumulation during systemic acquired resistance (SAR) establishment. In Arabidopsis thaliana (Mouse-ear cress), this protein is Glycerol-3-phosphate dehydrogenase [NAD(+)] At3g07690, cytosolic.